The primary structure comprises 516 residues: Maturase K (516 aa).

Belongs to the intron maturase 2 family. MatK subfamily.

It is found in the plastid. The protein localises to the chloroplast. Its function is as follows. Usually encoded in the trnK tRNA gene intron. Probably assists in splicing its own and other chloroplast group II introns. This is Maturase K from Galanthus nivalis (Common snowdrop).